A 467-amino-acid polypeptide reads, in one-letter code: tRNA-2-methylthio-N(6)-dimethylallyladenosine synthase (467 aa).

Positions 1–20 (MSDDTTQIEPAMAQETSPRA) are disordered. Residues 23 to 143 (RKVFVKTYGC…LPNALARVRG (121 aa)) form the MTTase N-terminal domain. The [4Fe-4S] cluster site is built by cysteine 32, cysteine 68, cysteine 106, cysteine 184, cysteine 188, and cysteine 191. One can recognise a Radical SAM core domain in the interval 170–402 (RKRGVSAFLT…QALLSAQQYA (233 aa)). The TRAM domain maps to 405-467 (DSMIGRKMDV…TNSLIAQKLA (63 aa)).

The protein belongs to the methylthiotransferase family. MiaB subfamily. Monomer. [4Fe-4S] cluster serves as cofactor.

Its subcellular location is the cytoplasm. It catalyses the reaction N(6)-dimethylallyladenosine(37) in tRNA + (sulfur carrier)-SH + AH2 + 2 S-adenosyl-L-methionine = 2-methylsulfanyl-N(6)-dimethylallyladenosine(37) in tRNA + (sulfur carrier)-H + 5'-deoxyadenosine + L-methionine + A + S-adenosyl-L-homocysteine + 2 H(+). Its function is as follows. Catalyzes the methylthiolation of N6-(dimethylallyl)adenosine (i(6)A), leading to the formation of 2-methylthio-N6-(dimethylallyl)adenosine (ms(2)i(6)A) at position 37 in tRNAs that read codons beginning with uridine. This chain is tRNA-2-methylthio-N(6)-dimethylallyladenosine synthase, found in Brucella melitensis biotype 1 (strain ATCC 23456 / CCUG 17765 / NCTC 10094 / 16M).